The primary structure comprises 267 residues: Multivesicular body subunit 12A (267 aa).

The MABP domain maps to 7–146 (AAPLSGVGWA…SFAIWCKKGA (140 aa)). The SH3-binding signature appears at 154 to 159 (PVPKPR). The region spanning 210-259 (MDGVPFTLHPKFERSPKSDSSAILTDLTVKSLADIEKEYNYTFVVERTAA) is the UMA domain.

It belongs to the MVB12 family. Component of the ESCRT-I complex (endosomal sorting complex required for transport I).

The protein localises to the cytoplasm. The protein resides in the endosome. Its subcellular location is the late endosome membrane. In terms of biological role, component of the ESCRT-I complex, a regulator of vesicular trafficking process. Required for the sorting of endocytic ubiquitinated cargos into multivesicular bodies. The chain is Multivesicular body subunit 12A (MVB12A) from Gallus gallus (Chicken).